The primary structure comprises 360 residues: Biotin synthase (360 aa).

The segment at 1–21 is disordered; it reads MTQLNIAPASTDTAAASNNNA. The Radical SAM core domain maps to 62–289; it reads NTVQLSTLLS…RAMVRLSAGR (228 aa). Positions 77, 81, and 84 each coordinate [4Fe-4S] cluster. The [2Fe-2S] cluster site is built by C121, C152, C212, and R284.

It belongs to the radical SAM superfamily. Biotin synthase family. As to quaternary structure, homodimer. [4Fe-4S] cluster serves as cofactor. The cofactor is [2Fe-2S] cluster.

The enzyme catalyses (4R,5S)-dethiobiotin + (sulfur carrier)-SH + 2 reduced [2Fe-2S]-[ferredoxin] + 2 S-adenosyl-L-methionine = (sulfur carrier)-H + biotin + 2 5'-deoxyadenosine + 2 L-methionine + 2 oxidized [2Fe-2S]-[ferredoxin]. The protein operates within cofactor biosynthesis; biotin biosynthesis; biotin from 7,8-diaminononanoate: step 2/2. Its function is as follows. Catalyzes the conversion of dethiobiotin (DTB) to biotin by the insertion of a sulfur atom into dethiobiotin via a radical-based mechanism. This Paraburkholderia xenovorans (strain LB400) protein is Biotin synthase.